The chain runs to 231 residues: PIAGSMVLAAILLKLGGYGIIRMMQILPTTKTDLFLPFMVLALWGAILANLTCLQQTDLKSLIAYSSISHMGLVVAAIIIQTPWGLSGAMALMIAHGFTSSALFCLANTTYERTHTRILILTRGLHNILPMATTWWLLTNLMNIATPPTMNFTSELLIMSALFNWCPTTIIMLGLSMLITASYSLHMFLSTQMGSALTNNQTEPTHSREHLLITLHIIPLVMVSLKPELII.

6 consecutive transmembrane segments (helical) span residues 1-21 (PIAG…YGII), 34-54 (LFLP…LTCL), 63-85 (IAYS…TPWG), 89-111 (AMAL…NTTY), 118-138 (ILIL…WWLL), and 156-176 (LLIM…LGLS).

Belongs to the complex I subunit 4 family.

It localises to the mitochondrion membrane. It catalyses the reaction a ubiquinone + NADH + 5 H(+)(in) = a ubiquinol + NAD(+) + 4 H(+)(out). Core subunit of the mitochondrial membrane respiratory chain NADH dehydrogenase (Complex I) that is believed to belong to the minimal assembly required for catalysis. Complex I functions in the transfer of electrons from NADH to the respiratory chain. The immediate electron acceptor for the enzyme is believed to be ubiquinone. The chain is NADH-ubiquinone oxidoreductase chain 4 (MT-ND4) from Ovophis okinavensis (Ryukyu Island pit viper).